A 146-amino-acid chain; its full sequence is Cytidine deaminase (146 aa).

The region spanning 13-140 (EHVQRLLLSS…ELLPASFGPE (128 aa)) is the CMP/dCMP-type deaminase domain. 54–56 (NIE) contacts substrate. A Zn(2+)-binding site is contributed by cysteine 65. The active-site Proton donor is the glutamate 67. Positions 99 and 102 each coordinate Zn(2+).

The protein belongs to the cytidine and deoxycytidylate deaminase family. As to quaternary structure, homotetramer. Zn(2+) is required as a cofactor.

The enzyme catalyses cytidine + H2O + H(+) = uridine + NH4(+). It carries out the reaction 2'-deoxycytidine + H2O + H(+) = 2'-deoxyuridine + NH4(+). Its function is as follows. This enzyme scavenges exogenous and endogenous cytidine and 2'-deoxycytidine for UMP synthesis. The protein is Cytidine deaminase (Cda) of Mus musculus (Mouse).